The following is a 348-amino-acid chain: Putative S-adenosyl-L-methionine-dependent methyltransferase Mb3432 (348 aa).

S-adenosyl-L-methionine is bound by residues Asp171 and 200–201 (DL).

The protein belongs to the UPF0677 family.

In terms of biological role, exhibits S-adenosyl-L-methionine-dependent methyltransferase activity. This chain is Putative S-adenosyl-L-methionine-dependent methyltransferase Mb3432, found in Mycobacterium bovis (strain ATCC BAA-935 / AF2122/97).